Consider the following 147-residue polypeptide: Transcriptional repressor NrdR (147 aa).

A zinc finger spans residues 3-34 (CLFCRSDDTKVIDSRTSEDGISIRRRRECQLC). The 91-residue stretch at 46–136 (LTVIKRNGTS…VYQDFDSLED (91 aa)) folds into the ATP-cone domain.

This sequence belongs to the NrdR family. It depends on Zn(2+) as a cofactor.

Its function is as follows. Negatively regulates transcription of bacterial ribonucleotide reductase nrd genes and operons by binding to NrdR-boxes. The protein is Transcriptional repressor NrdR of Tropheryma whipplei (strain TW08/27) (Whipple's bacillus).